The primary structure comprises 1745 residues: DNA-directed RNA polymerase II subunit RPB1 (1745 aa).

Zn(2+)-binding residues include C67, C70, C77, H80, C107, C110, C148, and C167. 3 residues coordinate Mg(2+): D481, D483, and D485. Positions 810-822 are bridging helix; the sequence is PQEFFFHAMGGRE. K1247 participates in a covalent cross-link: Glycyl lysine isopeptide (Lys-Gly) (interchain with G-Cter in ubiquitin). The disordered stretch occupies residues 1530 to 1745; it reads NGPTSPGFGD…KEQKDENGTH (216 aa). Residues 1546–1730 are compositionally biased toward low complexity; that stretch reads SPTSPAYSPT…SPRSPSYSPS (185 aa). 24 repeat units span residues 1552–1558, 1559–1565, 1566–1572, 1573–1579, 1580–1586, 1587–1593, 1594–1600, 1601–1607, 1608–1614, 1615–1621, 1622–1628, 1629–1635, 1636–1642, 1643–1649, 1650–1656, 1657–1663, 1664–1670, 1671–1677, 1678–1684, 1685–1691, 1692–1698, 1699–1705, 1706–1712, and 1713–1719. The interval 1552–1726 is C-terminal domain (CTD); 25 X 7 AA approximate tandem repeats of Y-S-P-T-S-P-[TSAN]; the sequence is YSPTSPSYSP…SPQYSPRSPS (175 aa). The 25; approximate repeat unit spans residues 1720–1726; the sequence is YSPRSPS. The segment covering 1734 to 1745 has biased composition (basic and acidic residues); it reads NDKEQKDENGTH.

This sequence belongs to the RNA polymerase beta' chain family. In terms of assembly, component of the RNA polymerase II (Pol II) complex consisting of 12 subunits. In terms of processing, the tandem 7 residues repeats in the C-terminal domain (CTD) can be highly phosphorylated. The phosphorylation activates Pol II. Phosphorylation occurs mainly at residues 'Ser-2' and 'Ser-5' of the heptapeptide repeat. The phosphorylation state is believed to result from the balanced action of site-specific CTD kinases and phosphatase, and a 'CTD code' that specifies the position of Pol II within the transcription cycle has been proposed. Following transcription stress, the elongating form of RNA polymerase II (RNA pol IIo) is polyubiquitinated via 'Lys-63'-linkages on Lys-1247 at DNA damage sites without leading to degradation: ubiquitination promotes RNA pol IIo backtracking to allow access by the transcription-coupled nucleotide excision repair (TC-NER) machinery. Subsequent DEF1-dependent polyubiquitination by the elongin complex via 'Lys-48'-linkages may lead to proteasome-mediated degradation; presumably at stalled RNA pol II where TC-NER has failed, to halt global transcription and enable 'last resort' DNA repair pathways.

It localises to the nucleus. The catalysed reaction is RNA(n) + a ribonucleoside 5'-triphosphate = RNA(n+1) + diphosphate. DNA-dependent RNA polymerase catalyzes the transcription of DNA into RNA using the four ribonucleoside triphosphates as substrates. Largest and catalytic component of RNA polymerase II which synthesizes mRNA precursors and many functional non-coding RNAs. Forms the polymerase active center together with the second largest subunit. Pol II is the central component of the basal RNA polymerase II transcription machinery. It is composed of mobile elements that move relative to each other. RPB1 is part of the core element with the central large cleft, the clamp element that moves to open and close the cleft and the jaws that are thought to grab the incoming DNA template. At the start of transcription, a single-stranded DNA template strand of the promoter is positioned within the central active site cleft of Pol II. A bridging helix emanates from RPB1 and crosses the cleft near the catalytic site and is thought to promote translocation of Pol II by acting as a ratchet that moves the RNA-DNA hybrid through the active site by switching from straight to bent conformations at each step of nucleotide addition. During transcription elongation, Pol II moves on the template as the transcript elongates. Elongation is influenced by the phosphorylation status of the C-terminal domain (CTD) of Pol II largest subunit (RPB1), which serves as a platform for assembly of factors that regulate transcription initiation, elongation, termination and mRNA processing. In Eremothecium gossypii (strain ATCC 10895 / CBS 109.51 / FGSC 9923 / NRRL Y-1056) (Yeast), this protein is DNA-directed RNA polymerase II subunit RPB1 (RPB1).